The following is a 197-amino-acid chain: Phosphoheptose isomerase (197 aa).

An SIS domain is found at 36 to 197 (LFAALANNGR…IDALLLGDTE (162 aa)). Residue 51 to 53 (NGG) coordinates substrate. Residues histidine 60 and glutamate 64 each contribute to the Zn(2+) site. Substrate contacts are provided by residues glutamate 64, 93 to 94 (ND), 119 to 121 (STS), serine 124, and glutamine 174. Glutamine 174 and histidine 182 together coordinate Zn(2+).

This sequence belongs to the SIS family. GmhA subfamily. Homotetramer. It depends on Zn(2+) as a cofactor.

The protein resides in the cytoplasm. It catalyses the reaction 2 D-sedoheptulose 7-phosphate = D-glycero-alpha-D-manno-heptose 7-phosphate + D-glycero-beta-D-manno-heptose 7-phosphate. It functions in the pathway carbohydrate biosynthesis; D-glycero-D-manno-heptose 7-phosphate biosynthesis; D-glycero-alpha-D-manno-heptose 7-phosphate and D-glycero-beta-D-manno-heptose 7-phosphate from sedoheptulose 7-phosphate: step 1/1. Catalyzes the isomerization of sedoheptulose 7-phosphate in D-glycero-D-manno-heptose 7-phosphate. This is Phosphoheptose isomerase from Bordetella avium (strain 197N).